The primary structure comprises 96 residues: UPF0235 protein NT01EI_0281 (96 aa).

Belongs to the UPF0235 family.

In Edwardsiella ictaluri (strain 93-146), this protein is UPF0235 protein NT01EI_0281.